The chain runs to 142 residues: MASLRRRVRAIALQILFELDATDHSPDQVVARRLEEERLPPEGERFLRRLVFGAWEHASYLDRIIEETAPNWPVSQMPGVDKAILRIALFEALIDEEEKTPLKAIINEAVELAKQYGSDNSSRFVNGVLGTVVSRYRERRKG.

The protein belongs to the NusB family.

In terms of biological role, involved in transcription antitermination. Required for transcription of ribosomal RNA (rRNA) genes. Binds specifically to the boxA antiterminator sequence of the ribosomal RNA (rrn) operons. The protein is Transcription antitermination protein NusB of Roseiflexus sp. (strain RS-1).